Reading from the N-terminus, the 564-residue chain is Proline--tRNA ligase 1 (564 aa).

The protein belongs to the class-II aminoacyl-tRNA synthetase family. ProS type 1 subfamily. Homodimer.

It localises to the cytoplasm. The enzyme catalyses tRNA(Pro) + L-proline + ATP = L-prolyl-tRNA(Pro) + AMP + diphosphate. Its function is as follows. Catalyzes the attachment of proline to tRNA(Pro) in a two-step reaction: proline is first activated by ATP to form Pro-AMP and then transferred to the acceptor end of tRNA(Pro). As ProRS can inadvertently accommodate and process non-cognate amino acids such as alanine and cysteine, to avoid such errors it has two additional distinct editing activities against alanine. One activity is designated as 'pretransfer' editing and involves the tRNA(Pro)-independent hydrolysis of activated Ala-AMP. The other activity is designated 'posttransfer' editing and involves deacylation of mischarged Ala-tRNA(Pro). The misacylated Cys-tRNA(Pro) is not edited by ProRS. The protein is Proline--tRNA ligase 1 of Streptomyces avermitilis (strain ATCC 31267 / DSM 46492 / JCM 5070 / NBRC 14893 / NCIMB 12804 / NRRL 8165 / MA-4680).